The chain runs to 883 residues: DNA double-strand break repair Rad50 ATPase (883 aa).

ATP-binding positions include Lys-12, 32–38 (NGSGKSS), and Gln-137. Residues 244-283 (ERYEESRTALADVEETIADVREAVAEAERERETLADRVSD) are a coiled coil. Disordered stretches follow at residues 271 to 290 (ERERETLADRVSDHRERASD) and 305 to 326 (DDPDAEDASAERDAVADQREAV). Basic and acidic residues predominate over residues 313–326 (SAERDAVADQREAV). 2 coiled-coil regions span residues 336 to 389 (AVSR…IEAL) and 414 to 452 (LDDATAERDELRERVATLRADRQSAADRVAEAEALLDEG). One can recognise a Zinc-hook domain in the interval 407–506 (FGAAEAFLDD…RVDRGESLVA (100 aa)). Zn(2+) contacts are provided by Cys-454 and Cys-457. The segment at 508-565 (EDRVDDLEQQRERAVERRDEQADIADAKRDQAAEKRDRAADLDAEAEDARADAAAKRD) is disordered. Coiled coils occupy residues 571–604 (RETLAALNADQTALKERLDALADLVDRLEAAADA) and 668–720 (KLQA…VTAL).

It belongs to the SMC family. RAD50 subfamily. In terms of assembly, homodimer. Forms a heterotetramer composed of two Mre11 subunits and two Rad50 subunits. Zn(2+) serves as cofactor.

Part of the Rad50/Mre11 complex, which is involved in the early steps of DNA double-strand break (DSB) repair. Rad50 controls the balance between DNA end bridging and DNA resection via ATP-dependent structural rearrangements of the Rad50/Mre11 complex. In Halobacterium salinarum (strain ATCC 700922 / JCM 11081 / NRC-1) (Halobacterium halobium), this protein is DNA double-strand break repair Rad50 ATPase.